The chain runs to 872 residues: Trichohyalin-like protein 1 (872 aa).

Residues 46-81 (CAIHAVERNLNLLNIDSNGAISFDEFVLAIFSFLNV) form the EF-hand domain. Over residues 117-127 (QWTEGTSQTQD) the composition is skewed to polar residues. Disordered regions lie at residues 117-759 (QWTE…ERGA), 774-813 (LQQT…DSSD), and 830-872 (EFLP…APKQ). Composition is skewed to basic and acidic residues over residues 142-155 (SLEE…RVDP), 164-190 (LPVE…KVDQ), 218-235 (TKGE…DILA), 296-307 (GKDEPSSEHVDL), 324-348 (AAKD…ETRD), 365-375 (RVERKGVRGPE), 399-435 (EDKK…KDSE), and 486-505 (SGEK…KEDD). Residues 538–570 (NSETSDLFVQGDSQSQTNPFRGSVQGSDSNNPE) are compositionally biased toward polar residues. 3 stretches are compositionally biased toward basic and acidic residues: residues 571–584 (TQKH…KRVQ), 592–608 (RGED…EHEG), and 664–684 (TKKD…KEED). Composition is skewed to polar residues over residues 699–708 (ENNAVSQKTC) and 718–729 (SPQQLAGEQSLS). Residues 730 to 751 (TKEHDPSVSESGLEERMQRDQE) show a composition bias toward basic and acidic residues. Polar residues-rich tracts occupy residues 774-793 (LQQT…TASV) and 801-812 (NQSSASLTNDSS). Residues 849 to 865 (LEDKQGRPQREELEPQK) show a composition bias toward basic and acidic residues.

The protein belongs to the S-100 family.

This chain is Trichohyalin-like protein 1 (TCHHL1), found in Bos taurus (Bovine).